We begin with the raw amino-acid sequence, 1161 residues long: DNA-directed RNA polymerase subunit beta (1161 aa).

The protein belongs to the RNA polymerase beta chain family. The RNAP catalytic core consists of 2 alpha, 1 beta, 1 beta' and 1 omega subunit. When a sigma factor is associated with the core the holoenzyme is formed, which can initiate transcription. The RNAP complex including the principal sigma factor HrdB also interacts with RNA-binding protein RbpA.

The enzyme catalyses RNA(n) + a ribonucleoside 5'-triphosphate = RNA(n+1) + diphosphate. Functionally, DNA-dependent RNA polymerase catalyzes the transcription of DNA into RNA using the four ribonucleoside triphosphates as substrates. The chain is DNA-directed RNA polymerase subunit beta from Streptomyces coelicolor (strain ATCC BAA-471 / A3(2) / M145).